Here is a 105-residue protein sequence, read N- to C-terminus: Putative pterin-4-alpha-carbinolamine dehydratase (105 aa).

The protein belongs to the pterin-4-alpha-carbinolamine dehydratase family.

The enzyme catalyses (4aS,6R)-4a-hydroxy-L-erythro-5,6,7,8-tetrahydrobiopterin = (6R)-L-erythro-6,7-dihydrobiopterin + H2O. This Sinorhizobium medicae (strain WSM419) (Ensifer medicae) protein is Putative pterin-4-alpha-carbinolamine dehydratase.